A 102-amino-acid polypeptide reads, in one-letter code: Major basic nuclear protein 2 (102 aa).

Residues 1–11 (MKAMKATKKAM) are compositionally biased toward basic residues. The segment at 1–43 (MKAMKATKKAMTKTGLAEALAPKPSSARRIAPPSSRAWPPSAQ) is disordered. Positions 21-42 (APKPSSARRIAPPSSRAWPPSA) are enriched in low complexity.

The protein localises to the nucleus. The polypeptide is Major basic nuclear protein 2 (HCc2) (Crypthecodinium cohnii (Dinoflagellate)).